The following is a 161-amino-acid chain: PRS fimbrial major pilin protein (161 aa).

This sequence belongs to the fimbrial protein family.

It is found in the secreted. The protein resides in the fimbrium. Its function is as follows. Fimbriae (also called pili), polar filaments radiating from the surface of the bacterium to a length of 0.5-1.5 micrometers and numbering 100-300 per cell, enable bacteria to colonize the epithelium of specific host organs. This Escherichia coli protein is PRS fimbrial major pilin protein (prsA).